Reading from the N-terminus, the 441-residue chain is 23S rRNA (uracil(1939)-C(5))-methyltransferase RlmD (441 aa).

Residues 10–68 (KPLKQQSLVLDITAMDHHGRGIAKHNNKVCFVSNALPNEQVKATIIADKARYSEAQTHK) form the TRAM domain. Positions 81, 87, 90, and 169 each coordinate [4Fe-4S] cluster. Gln274, Phe303, Asn308, Glu324, Asp351, and Asp372 together coordinate S-adenosyl-L-methionine. The active-site Nucleophile is Cys398.

It belongs to the class I-like SAM-binding methyltransferase superfamily. RNA M5U methyltransferase family. RlmD subfamily.

The enzyme catalyses uridine(1939) in 23S rRNA + S-adenosyl-L-methionine = 5-methyluridine(1939) in 23S rRNA + S-adenosyl-L-homocysteine + H(+). In terms of biological role, catalyzes the formation of 5-methyl-uridine at position 1939 (m5U1939) in 23S rRNA. This is 23S rRNA (uracil(1939)-C(5))-methyltransferase RlmD from Pseudoalteromonas translucida (strain TAC 125).